The chain runs to 397 residues: uncharacterized protein (397 aa).

10 helical membrane-spanning segments follow: residues 2-24, 44-66, 92-114, 124-143, 150-169, 173-195, 255-277, 297-319, 331-350, and 354-373; these read LNLL…PGIH, YIPF…SAFL, AIVL…SLFL, AFYC…FILY, SVWE…AVLY, AFNI…INNL, FIVS…VIFI, INTA…LNLS, FKFL…IIGS, and YLIY…LLAV.

Its subcellular location is the cell membrane. This is an uncharacterized protein from Methanocaldococcus jannaschii (strain ATCC 43067 / DSM 2661 / JAL-1 / JCM 10045 / NBRC 100440) (Methanococcus jannaschii).